A 169-amino-acid polypeptide reads, in one-letter code: Large ribosomal subunit protein uL23 (169 aa).

The segment at 1–20 (MAGKKVKSNTPKQDLSVSKS) is disordered. The span at 8-20 (SNTPKQDLSVSKS) shows a compositional bias: polar residues.

It belongs to the universal ribosomal protein uL23 family.

Functionally, this protein binds to a specific region on the 26S rRNA. In Dictyostelium discoideum (Social amoeba), this protein is Large ribosomal subunit protein uL23 (rpl23a).